Consider the following 68-residue polypeptide: Small ribosomal subunit protein bS21 (68 aa).

The disordered stretch occupies residues 39–68 (PPSVKRVRKKQESERRHRKERAMRRRMMEE). Positions 54 to 68 (RHRKERAMRRRMMEE) are enriched in basic residues.

Belongs to the bacterial ribosomal protein bS21 family.

This Orientia tsutsugamushi (strain Boryong) (Rickettsia tsutsugamushi) protein is Small ribosomal subunit protein bS21.